The chain runs to 662 residues: Glycogen debranching enzyme (662 aa).

Catalysis depends on D338, which acts as the Nucleophile. E373 serves as the catalytic Proton donor.

It belongs to the glycosyl hydrolase 13 family.

The enzyme catalyses Hydrolysis of (1-&gt;6)-alpha-D-glucosidic linkages to branches with degrees of polymerization of three or four glucose residues in limit dextrin.. Its pathway is glycan degradation; glycogen degradation. Functionally, removes maltotriose and maltotetraose chains that are attached by 1,6-alpha-linkage to the limit dextrin main chain, generating a debranched limit dextrin. This Yersinia pseudotuberculosis serotype O:1b (strain IP 31758) protein is Glycogen debranching enzyme.